Consider the following 91-residue polypeptide: MTKKRNNFNDSYVSVNNRTGFKRSKVCPLATSQDEDIDYKNTDLLSRFTSDYGRILPRRLTGVCAKKQRKLRLAIIRARFLALVPYCTKKV.

It belongs to the bacterial ribosomal protein bS18 family. Part of the 30S ribosomal subunit. Forms a tight heterodimer with protein bS6.

Binds as a heterodimer with protein bS6 to the central domain of the 16S rRNA, where it helps stabilize the platform of the 30S subunit. The chain is Small ribosomal subunit protein bS18 from Wolbachia sp. subsp. Brugia malayi (strain TRS).